The sequence spans 430 residues: Adenylosuccinate synthetase (430 aa).

GTP-binding positions include glycine 12–lysine 18 and glycine 40–threonine 42. The active-site Proton acceptor is the aspartate 13. Positions 13 and 40 each coordinate Mg(2+). IMP-binding positions include aspartate 13 to lysine 16, asparagine 38 to histidine 41, threonine 130, arginine 144, glutamine 224, threonine 239, and arginine 303. Histidine 41 functions as the Proton donor in the catalytic mechanism. Substrate is bound at residue valine 299 to arginine 305. Residues arginine 305, lysine 331–aspartate 333, and serine 413–serine 415 contribute to the GTP site.

This sequence belongs to the adenylosuccinate synthetase family. As to quaternary structure, homodimer. Requires Mg(2+) as cofactor.

Its subcellular location is the cytoplasm. The enzyme catalyses IMP + L-aspartate + GTP = N(6)-(1,2-dicarboxyethyl)-AMP + GDP + phosphate + 2 H(+). It participates in purine metabolism; AMP biosynthesis via de novo pathway; AMP from IMP: step 1/2. In terms of biological role, plays an important role in the de novo pathway of purine nucleotide biosynthesis. Catalyzes the first committed step in the biosynthesis of AMP from IMP. The chain is Adenylosuccinate synthetase from Methylobacterium sp. (strain 4-46).